Here is a 300-residue protein sequence, read N- to C-terminus: 33 kDa chaperonin (300 aa).

Cystine bridges form between C235–C237 and C269–C272.

The protein belongs to the HSP33 family. Post-translationally, under oxidizing conditions two disulfide bonds are formed involving the reactive cysteines. Under reducing conditions zinc is bound to the reactive cysteines and the protein is inactive.

Its subcellular location is the cytoplasm. Functionally, redox regulated molecular chaperone. Protects both thermally unfolding and oxidatively damaged proteins from irreversible aggregation. Plays an important role in the bacterial defense system toward oxidative stress. The polypeptide is 33 kDa chaperonin (Pseudomonas fluorescens (strain ATCC BAA-477 / NRRL B-23932 / Pf-5)).